The primary structure comprises 1076 residues: Nickel-cobalt-cadmium resistance protein NccA (1076 aa).

Helical transmembrane passes span 14 to 34 (WLVL…LNLL), 367 to 387 (VAKN…ALLG), 391 to 411 (AAVI…IGMN), 419 to 439 (LMSL…IIVE), 476 to 496 (TVYG…FQGV), 503 to 523 (PMVI…LTFV), 562 to 582 (MPFL…FTFV), 904 to 924 (LAII…MAIG), 929 to 949 (TATV…ALVL), 960 to 980 (VGFI…ISAI), 1004 to 1024 (PVLM…IATG), and 1036 to 1056 (VVIG…PAVC).

It belongs to the resistance-nodulation-cell division (RND) (TC 2.A.6) family.

The protein localises to the cell membrane. Its function is as follows. Component of the NCC cation-efflux system that confers resistance to nickel, cobalt and cadmium. May form a membrane tunnel, which allows ion transport across the membrane. The chain is Nickel-cobalt-cadmium resistance protein NccA (nccA) from Alcaligenes xylosoxydans xylosoxydans (Achromobacter xylosoxidans).